Reading from the N-terminus, the 257-residue chain is UPF0246 protein Spea_1078 (257 aa).

Belongs to the UPF0246 family.

This chain is UPF0246 protein Spea_1078, found in Shewanella pealeana (strain ATCC 700345 / ANG-SQ1).